The primary structure comprises 331 residues: Gem-associated protein 2 (331 aa).

Disordered stretches follow at residues 1–23 (MDEF…NEPL), 101–130 (SNRP…LIPQ), and 151–222 (NNNN…TKKP). The segment covering 11 to 21 (VGEEIEPDDNE) has biased composition (acidic residues). Residues 106-126 (NNNNNNNNNNNNNNNNNNNNN) show a composition bias toward low complexity. The span at 165–215 (DNQEDDDDDENNEDYEYNENKEEEEEEEEEEEEEEEVEEEEEEEEEEEEVV) shows a compositional bias: acidic residues. Residues 173-224 (DENNEDYEYNENKEEEEEEEEEEEEEEEVEEEEEEEEEEEEVVDYSTKKPTL) are a coiled coil.

Belongs to the gemin-2 family.

The protein resides in the nucleus. The protein localises to the gem. Its subcellular location is the cytoplasm. The SMN complex catalyzes the assembly of small nuclear ribonucleoproteins (snRNPs), the building blocks of the spliceosome, and thereby plays an important role in the splicing of cellular pre-mRNAs. Most spliceosomal snRNPs contain a common set of Sm proteins SNRPB, SNRPD1, SNRPD2, SNRPD3, SNRPE, SNRPF and SNRPG that assemble in a heptameric protein ring on the Sm site of the small nuclear RNA to form the core snRNP (Sm core). In the cytosol, the Sm proteins SNRPD1, SNRPD2, SNRPE, SNRPF and SNRPG (5Sm) are trapped in an inactive 6S pICln-Sm complex by the chaperone CLNS1A that controls the assembly of the core snRNP. To assemble core snRNPs, the SMN complex accepts the trapped 5Sm proteins from CLNS1A. Binding of snRNA inside 5Sm ultimately triggers eviction of the SMN complex, thereby allowing binding of SNRPD3 and SNRPB to complete assembly of the core snRNP. Within the SMN complex, GEMIN2 constrains the conformation of 5Sm, thereby promoting 5Sm binding to snRNA containing the snRNP code (a nonameric Sm site and a 3'-adjacent stem-loop), thus preventing progression of assembly until a cognate substrate is bound. Its function is as follows. May play an essential role in spliceosomal snRNP assembly in the cytoplasm and may be required for pre-mRNA splicing in the nucleus. In Dictyostelium discoideum (Social amoeba), this protein is Gem-associated protein 2 (gemin2).